Here is a 957-residue protein sequence, read N- to C-terminus: Outer kinetochore KNL1 complex subunit knl-1 (957 aa).

The stretch at M87–T90 is repeat 1. An 8 X 4 AA repeats of M-[D/E]-[I/L/M]-[S/T] region spans residues M87–T393. The disordered stretch occupies residues I89–M111. Residues G91 to N106 show a composition bias toward polar residues. 7 tandem repeats follow at residues M109 to S112, M206 to T209, M251 to T254, M282 to T285, M326 to T329, M367 to T370, and M390 to T393. The interval S476–S504 is disordered. A coiled-coil region spans residues K830–R950.

Component of the KNL1 complex composed of knl-1 and kbp-5. Part of the ten-subunit outer kinetochore KMN network that includes the KNL1, MIS12 and NDC80 complexes. Interacts with the protein phosphatase 1 (PP1) catalytic subunit gsp-1; the interaction is direct. Interacts with the protein phosphatase 1 (PP1) catalytic subunit gsp-2; the interaction is direct. Interacts with the MIS12 complex subunits kbp-1, kbp-2 and mis-12. Interacts with the NDC80 complex components ndc-80 and him-10. Interacts with knl-3. Interacts with kbp-3. Interacts with kbp-4. Interacts with kbp-5.

It localises to the cytoplasm. The protein resides in the cell cortex. Its subcellular location is the chromosome. It is found in the centromere. The protein localises to the kinetochore. Its function is as follows. Acts as a component of the outer kinetochore KNL1 complex that serves as a docking point for spindle assembly checkpoint components and mediates microtubule-kinetochore interactions. Kinetochores, consisting of a centromere-associated inner segment and a microtubule-contacting outer segment, play a crucial role in chromosome segregation by mediating the physical connection between centromeric DNA and spindle microtubules. The outer kinetochore is made up of the ten-subunit KMN network, comprising the MIS12, NDC80 and KNL1 complexes, and auxiliary microtubule-associated components; together they connect the outer kinetochore with the inner kinetochore, bind microtubules, and mediate interactions with mitotic checkpoint proteins that delay anaphase until chromosomes are bioriented on the spindle. Binds the protein phosphatase 1 catalytic subunits gsp-1 and gsp-2, which has a role in delaying formation of load-bearing kinetochore-microtubule attachments. Required for the recruitment of spindle-assembly checkpoint components bub-1 and mdf-1/2 to unattached kinetochores. Binds microtubules which plays a role in silencing of the spindle assembly checkpoint, but not the formation of load-bearing microtubule-kinetochore attachments. Has a role in the correct localization of the spindly-like protein spdl-1 and the RZZ complex that is composed of rod-1, czw-1 and zwl-1 to kinetochores. This Caenorhabditis briggsae protein is Outer kinetochore KNL1 complex subunit knl-1.